The primary structure comprises 203 residues: Small ribosomal subunit protein uS4 (203 aa).

Positions 20–44 (LPGLTRKRPKNTNPPGMHGAERKKK) are disordered. In terms of domain architecture, S4 RNA-binding spans 92–155 (MRLDCIVFRL…SSRKLVAAYA (64 aa)).

The protein belongs to the universal ribosomal protein uS4 family. In terms of assembly, part of the 30S ribosomal subunit. Contacts protein S5. The interaction surface between S4 and S5 is involved in control of translational fidelity.

In terms of biological role, one of the primary rRNA binding proteins, it binds directly to 16S rRNA where it nucleates assembly of the body of the 30S subunit. Functionally, with S5 and S12 plays an important role in translational accuracy. The sequence is that of Small ribosomal subunit protein uS4 from Synechococcus sp. (strain JA-2-3B'a(2-13)) (Cyanobacteria bacterium Yellowstone B-Prime).